We begin with the raw amino-acid sequence, 221 residues long: Lectin L6 (221 aa).

6 repeat units span residues 1–38, 39–75, 76–113, 114–150, 151–188, and 189–221. Residues 1 to 221 form a 6 X approximate tandem repeats region; that stretch reads VQWHQIPGKL…NSVDNIYRSG (221 aa). A disulfide bond links Cys-32 and Cys-36. Residues Cys-108 and Cys-112 are joined by a disulfide bond. Cys-183 and Cys-187 form a disulfide bridge.

The protein belongs to the tectonin family. Hemocytes.

It localises to the cytoplasmic vesicle. It is found in the secretory vesicle. Functionally, lipopolysaccharide-binding protein with Gram-negative antibacterial activity. Binds zinc and calcium. The polypeptide is Lectin L6 (Tachypleus tridentatus (Japanese horseshoe crab)).